Reading from the N-terminus, the 317-residue chain is MLNVTLLGSGGGMPMPERHLSSLMINYKGRKILVDCGEGTQVAIRKMNAGFKSIDIICITHVHGDHIFGIPGLLSTMGNSQRLDPVTIVGPKGISDVMRGLLLSIKQLPYSIEIIEDPKGKLGITNTEQGLKIKEQKDGMNDEITVSTLELDHSAPCFGYSFYLNRRPKFEPEKAIKNDVPRLIWSKLQKGETIVAGDRKYSPDLVLGEQRRGIKLTYITDTRPTKDIPQWINQSDLFICEGTYGDNDDMDKAIKNKHMTFMEAGELAKKGKVKELLLTHFSPALKEPNFYEHNAKKEFAHTTIGYDGYRKNIEYKN.

7 residues coordinate Zn(2+): H61, H63, D65, H66, H153, D221, and H280. Residue D65 is the Proton acceptor of the active site.

The protein belongs to the RNase Z family. Homodimer. Requires Zn(2+) as cofactor.

The enzyme catalyses Endonucleolytic cleavage of RNA, removing extra 3' nucleotides from tRNA precursor, generating 3' termini of tRNAs. A 3'-hydroxy group is left at the tRNA terminus and a 5'-phosphoryl group is left at the trailer molecule.. Its function is as follows. Zinc phosphodiesterase, which displays some tRNA 3'-processing endonuclease activity. Probably involved in tRNA maturation, by removing a 3'-trailer from precursor tRNA. The sequence is that of Ribonuclease Z from Alkaliphilus oremlandii (strain OhILAs) (Clostridium oremlandii (strain OhILAs)).